We begin with the raw amino-acid sequence, 388 residues long: 1-deoxy-D-xylulose 5-phosphate reductoisomerase (388 aa).

NADPH is bound by residues Thr-10, Gly-11, Thr-12, Ile-13, Arg-37, Gln-38, and Asn-122. Lys-123 serves as a coordination point for 1-deoxy-D-xylulose 5-phosphate. Glu-124 is an NADPH binding site. Asp-148 contributes to the Mn(2+) binding site. The 1-deoxy-D-xylulose 5-phosphate site is built by Ser-149, Glu-150, Ser-179, and His-202. Mn(2+) is bound at residue Glu-150. Gly-208 serves as a coordination point for NADPH. Residues Ser-215, Asn-220, Lys-221, and Glu-224 each contribute to the 1-deoxy-D-xylulose 5-phosphate site. Glu-224 provides a ligand contact to Mn(2+).

Belongs to the DXR family. The cofactor is Mg(2+). Mn(2+) serves as cofactor.

It catalyses the reaction 2-C-methyl-D-erythritol 4-phosphate + NADP(+) = 1-deoxy-D-xylulose 5-phosphate + NADPH + H(+). Its pathway is isoprenoid biosynthesis; isopentenyl diphosphate biosynthesis via DXP pathway; isopentenyl diphosphate from 1-deoxy-D-xylulose 5-phosphate: step 1/6. Its function is as follows. Catalyzes the NADPH-dependent rearrangement and reduction of 1-deoxy-D-xylulose-5-phosphate (DXP) to 2-C-methyl-D-erythritol 4-phosphate (MEP). The chain is 1-deoxy-D-xylulose 5-phosphate reductoisomerase from Laribacter hongkongensis (strain HLHK9).